We begin with the raw amino-acid sequence, 754 residues long: Condensin complex subunit 2 (754 aa).

Positions 104-149 (LAQRKTNGASNGDDSNGGNGEGLGGDSDEANIEIDPLTGMPISNDP) are disordered. Over residues 118 to 128 (SNGGNGEGLGG) the composition is skewed to gly residues. Ser245 is subject to Phosphoserine. The disordered stretch occupies residues 359-379 (CYPDENHDNTSHDEQDDDNVN). Residues 362–371 (DENHDNTSHD) show a composition bias toward basic and acidic residues. Ser548 carries the post-translational modification Phosphoserine. The segment at 665–688 (HDSRKNREQSSNDSETHTEDESTK) is disordered.

It belongs to the CND2 (condensin subunit 2) family. In terms of assembly, component of the condensin complex, which contains the SMC2 and SMC4 heterodimer, and three non SMC subunits that probably regulate the complex: BRN1, YCS4 and YCG1/YCS5.

It is found in the nucleus. The protein resides in the cytoplasm. It localises to the chromosome. Its function is as follows. Regulatory subunit of the condensin complex, a complex required for conversion of interphase chromatin into mitotic-like condense chromosomes. The condensin complex probably introduces positive supercoils into relaxed DNA in the presence of type I topoisomerases and converts nicked DNA into positive knotted forms in the presence of type II topoisomerases. The condensin complex probably also plays a role during interphase. The protein is Condensin complex subunit 2 (BRN1) of Saccharomyces cerevisiae (strain ATCC 204508 / S288c) (Baker's yeast).